The following is a 267-amino-acid chain: Hydroxynaphthalene reductase-like protein Arp2 (267 aa).

NADP(+) is bound by residues Ile-25, Asn-45, Asp-71, and Asn-98. Catalysis depends on proton donor residues Ser-147 and Ser-148. Positions 162, 166, 195, and 197 each coordinate NADP(+). The Proton acceptor role is filled by Tyr-162. Residue Lys-166 is the Lowers pKa of active site Tyr of the active site.

This sequence belongs to the short-chain dehydrogenases/reductases (SDR) family.

Hydroxynaphthalene reductase-like protein; part of the Pks2 gene cluster that mediates the formation of infectious structures (appressoria), enabling these fungi to kill insects faster. The product of the Pks2 gene cluster is different from the one of Pks1 and has still not been identified. The polypeptide is Hydroxynaphthalene reductase-like protein Arp2 (Metarhizium brunneum (strain ARSEF 3297)).